A 93-amino-acid polypeptide reads, in one-letter code: MITTLIIIGAAFLVGPRTFKFVLAYLLGYYNAFGPPLQIVQFMVWLIIIYFPKKFFSLGWYFCHDAFSSYFGDPNGGQLPVSTKFHSLTDMID.

2 consecutive transmembrane segments (helical) span residues 5-25 and 32-52; these read LIII…VLAY and AFGP…IYFP.

The protein resides in the membrane. The sequence is that of Small hydrophobic protein from Tupaia virus (isolate Tupaia/Thailand/-/1986) (TUPV).